We begin with the raw amino-acid sequence, 181 residues long: MRRLLACSAGVLCFSQLGALELFLSPKIGITSVYQFGSNGGSDGTSSGKGVSFDRLIGRVDLGLILVNGLTISASAESSLTNVFVRAQALIGYAVRVGGLRAIVSSGVNICGDSCATSEGKSSAWYSKLLYSVPLNLEVQYYLTSFAGVAVAASTAVGVRDFNFKEFTLPLSLTIGPTFRV.

Positions 1-19 (MRRLLACSAGVLCFSQLGA) are cleaved as a signal peptide.

This is an uncharacterized protein from Treponema pallidum (strain Nichols).